The primary structure comprises 358 residues: Serine/threonine-protein phosphatase 2A activator 2 (358 aa).

It belongs to the PTPA-type PPIase family.

The protein resides in the cytoplasm. The enzyme catalyses [protein]-peptidylproline (omega=180) = [protein]-peptidylproline (omega=0). In terms of biological role, PPIases accelerate the folding of proteins. It catalyzes the cis-trans isomerization of proline imidic peptide bonds in oligopeptides. Acts as a regulatory subunit for PP2A-like phosphatases modulating their activity or substrate specificity, probably by inducing a conformational change in the catalytic subunit, a direct target of the PPIase. Can reactivate inactive phosphatase PP2A-phosphatase methylesterase complexes (PP2Ai) in presence of ATP and Mg(2+) by dissociating the inactive form from the complex. The chain is Serine/threonine-protein phosphatase 2A activator 2 (RRD2) from Candida albicans (strain SC5314 / ATCC MYA-2876) (Yeast).